The following is a 167-amino-acid chain: NADPH-dependent 7-cyano-7-deazaguanine reductase (167 aa).

Residues 1-24 (MTTRSQDQTRDLKVLGTGRLTSPE) form a disordered region. Catalysis depends on Cys-57, which acts as the Thioimide intermediate. The active-site Proton donor is Asp-64. Substrate is bound by residues 79 to 81 (VES) and 98 to 99 (ME).

It belongs to the GTP cyclohydrolase I family. QueF type 1 subfamily.

The protein resides in the cytoplasm. The catalysed reaction is 7-aminomethyl-7-carbaguanine + 2 NADP(+) = 7-cyano-7-deazaguanine + 2 NADPH + 3 H(+). Its pathway is tRNA modification; tRNA-queuosine biosynthesis. In terms of biological role, catalyzes the NADPH-dependent reduction of 7-cyano-7-deazaguanine (preQ0) to 7-aminomethyl-7-deazaguanine (preQ1). The chain is NADPH-dependent 7-cyano-7-deazaguanine reductase from Desulfovibrio desulfuricans (strain ATCC 27774 / DSM 6949 / MB).